We begin with the raw amino-acid sequence, 1001 residues long: E3 ubiquitin-protein ligase BRE1B (1001 aa).

Positions 1–31 are disordered; the sequence is MSGLGNKRAAGDGGSGPPEKKLSREEKTTTT. The span at 18–28 shows a compositional bias: basic and acidic residues; it reads PEKKLSREEKT. Lys-20 is modified (N6-acetyllysine). Ser-42 carries the phosphoserine modification. Positions 45 to 91 form a coiled coil; it reads EEIDLKVLQFKNKKLAERLEQRQACEDELRERIEKLEKRQATDDATL. The disordered stretch occupies residues 116–149; it reads GELSSAPEAPGTQEGPTCDGTPLPEPGTSELREP. Coiled-coil stretches lie at residues 228–377 and 437–523; these read ARTR…LRSL and LQKK…AQTS. N6-acetyllysine occurs at positions 355 and 517. The interval 516–646 is disordered; it reads GKLRAQTSGS…EKAKVEEAKR (131 aa). Polar residues predominate over residues 520–531; it reads AQTSGSTHSTPN. Ser-528 is subject to Phosphoserine. Glycyl lysine isopeptide (Lys-Gly) (interchain with G-Cter in SUMO2) cross-links involve residues Lys-578 and Lys-579. A Phosphoserine modification is found at Ser-585. Composition is skewed to basic and acidic residues over residues 602–619 and 633–646; these read RGRE…EREG and RADR…EAKR. Positions 627–946 form a coiled coil; the sequence is VASALSRADR…EEIKEYKARL (320 aa). An RING-type zinc finger spans residues 948–987; the sequence is CPCCNTRKKDAVLTKCFHVFCFECVRGRYEARQRKCPKCN.

It belongs to the BRE1 family. In terms of assembly, component of the RNF20/40 complex (also known as BRE1 complex) probably composed of 2 copies of RNF20/BRE1A and 2 copies of RNF40/BRE1B. Interacts with UBE2E1/UBCH6. Interacts with RB1 and WAC.

The protein resides in the nucleus. The catalysed reaction is S-ubiquitinyl-[E2 ubiquitin-conjugating enzyme]-L-cysteine + [acceptor protein]-L-lysine = [E2 ubiquitin-conjugating enzyme]-L-cysteine + N(6)-ubiquitinyl-[acceptor protein]-L-lysine.. It functions in the pathway protein modification; protein ubiquitination. Functionally, component of the RNF20/40 E3 ubiquitin-protein ligase complex that mediates monoubiquitination of 'Lys-120' of histone H2B (H2BK120ub1). H2BK120ub1 gives a specific tag for epigenetic transcriptional activation and is also prerequisite for histone H3 'Lys-4' and 'Lys-79' methylation (H3K4me and H3K79me, respectively). It thereby plays a central role in histone code and gene regulation. The RNF20/40 complex forms a H2B ubiquitin ligase complex in cooperation with the E2 enzyme UBE2A or UBE2B; reports about the cooperation with UBE2E1/UBCH are contradictory. Required for transcriptional activation of Hox genes. The sequence is that of E3 ubiquitin-protein ligase BRE1B (RNF40) from Macaca fascicularis (Crab-eating macaque).